The chain runs to 875 residues: Leucine--tRNA ligase (875 aa).

Residues 43-53 carry the 'HIGH' region motif; sequence PYPSGRIHIGH. The 'KMSKS' region motif lies at 631–635; it reads KMSKS. Lys-634 is an ATP binding site.

It belongs to the class-I aminoacyl-tRNA synthetase family.

Its subcellular location is the cytoplasm. It carries out the reaction tRNA(Leu) + L-leucine + ATP = L-leucyl-tRNA(Leu) + AMP + diphosphate. This Mesorhizobium japonicum (strain LMG 29417 / CECT 9101 / MAFF 303099) (Mesorhizobium loti (strain MAFF 303099)) protein is Leucine--tRNA ligase.